The chain runs to 99 residues: MLEQQRNPAEALIVSVLNSQSQVTNKPLRESVKQALKNYFAQLDGEDATDLYELVLSEVEHPMLDMVMQYTRGNQTRAALMLGVNRGTLRKKLKKYGMS.

The H-T-H motif DNA-binding region spans 75-94 (QTRAALMLGVNRGTLRKKLK).

It belongs to the transcriptional regulatory Fis family. As to quaternary structure, homodimer.

In terms of biological role, activates ribosomal RNA transcription. Plays a direct role in upstream activation of rRNA promoters. The protein is DNA-binding protein Fis of Actinobacillus succinogenes (strain ATCC 55618 / DSM 22257 / CCUG 43843 / 130Z).